We begin with the raw amino-acid sequence, 159 residues long: MQSKEDFIEMRVPASAEYVSLIRLTLSGVFSRAGATYDDIEDAKIAVSEAVTNAVKHAYKENNNVGIINIYFEILEDKIKIVISDKGDSFDYETTKSKIGPYDKDENIDFLREGGLGLFLIESLMDEVTVYKESGVTISMTKYIKKEQVRNNGERVEIS.

This sequence belongs to the anti-sigma-factor family.

It catalyses the reaction L-seryl-[protein] + ATP = O-phospho-L-seryl-[protein] + ADP + H(+). The enzyme catalyses L-threonyl-[protein] + ATP = O-phospho-L-threonyl-[protein] + ADP + H(+). Functionally, negative regulator of sigma-B activity. Phosphorylates and inactivates its specific antagonist protein, RsbV. Upon phosphorylation of RsbV, RsbW is released and binds to sigma-B, thereby blocking its ability to form an RNA polymerase holoenzyme (E-sigma-B). This Staphylococcus aureus (strain Newman) protein is Serine-protein kinase RsbW.